The chain runs to 352 residues: tRNA-specific 2-thiouridylase MnmA (352 aa).

Residues 6–13 (AMSGGVDS) and leucine 32 each bind ATP. The active-site Nucleophile is the cysteine 101. A disulfide bond links cysteine 101 and cysteine 194. Glycine 125 lines the ATP pocket. Residues 144-146 (KDQ) are interaction with tRNA. Residue cysteine 194 is the Cysteine persulfide intermediate of the active site.

It belongs to the MnmA/TRMU family.

It is found in the cytoplasm. It catalyses the reaction S-sulfanyl-L-cysteinyl-[protein] + uridine(34) in tRNA + AH2 + ATP = 2-thiouridine(34) in tRNA + L-cysteinyl-[protein] + A + AMP + diphosphate + H(+). Its function is as follows. Catalyzes the 2-thiolation of uridine at the wobble position (U34) of tRNA, leading to the formation of s(2)U34. The chain is tRNA-specific 2-thiouridylase MnmA from Frankia casuarinae (strain DSM 45818 / CECT 9043 / HFP020203 / CcI3).